The following is a 60-amino-acid chain: UPF0434 protein YcaR (60 aa).

This sequence belongs to the UPF0434 family.

The polypeptide is UPF0434 protein YcaR (Escherichia fergusonii (strain ATCC 35469 / DSM 13698 / CCUG 18766 / IAM 14443 / JCM 21226 / LMG 7866 / NBRC 102419 / NCTC 12128 / CDC 0568-73)).